The sequence spans 468 residues: ATP synthase subunit beta 1 (468 aa).

151-158 is a binding site for ATP; sequence GGAGVGKT.

Belongs to the ATPase alpha/beta chains family. As to quaternary structure, F-type ATPases have 2 components, CF(1) - the catalytic core - and CF(0) - the membrane proton channel. CF(1) has five subunits: alpha(3), beta(3), gamma(1), delta(1), epsilon(1). CF(0) has three main subunits: a(1), b(2) and c(9-12). The alpha and beta chains form an alternating ring which encloses part of the gamma chain. CF(1) is attached to CF(0) by a central stalk formed by the gamma and epsilon chains, while a peripheral stalk is formed by the delta and b chains.

The protein localises to the cell inner membrane. It catalyses the reaction ATP + H2O + 4 H(+)(in) = ADP + phosphate + 5 H(+)(out). In terms of biological role, produces ATP from ADP in the presence of a proton gradient across the membrane. The catalytic sites are hosted primarily by the beta subunits. The sequence is that of ATP synthase subunit beta 1 from Photobacterium profundum (strain SS9).